The primary structure comprises 870 residues: Probable coatomer subunit gamma (870 aa).

6 HEAT repeats span residues 60–97 (TEAT…VSDD), 99–133 (IIVT…TGML), 168–205 (EVVR…NDRL), 278–315 (SEIQ…AHPN), 316–350 (AVMS…GAES), and 389–425 (HTVM…ENPD).

This sequence belongs to the COPG family. Oligomeric complex that consists of at least the alpha, beta, beta', gamma, delta, epsilon and zeta subunits.

It is found in the cytoplasm. The protein localises to the golgi apparatus membrane. It localises to the cytoplasmic vesicle. The protein resides in the COPI-coated vesicle membrane. The coatomer is a cytosolic protein complex that binds to dilysine motifs and reversibly associates with Golgi non-clathrin-coated vesicles, which further mediate biosynthetic protein transport from the ER, via the Golgi up to the trans Golgi network. Coatomer complex is required for budding from Golgi membranes, and is essential for the retrograde Golgi-to-ER transport of dilysine-tagged proteins. The sequence is that of Probable coatomer subunit gamma from Caenorhabditis elegans.